The following is a 249-amino-acid chain: Nicotinamide/nicotinic acid mononucleotide adenylyltransferase (249 aa).

The NAD(+) site is built by serine 34 and phenylalanine 35. The ATP site is built by histidine 42 and lysine 75. Threonine 112, glycine 141, aspartate 143, tryptophan 154, arginine 173, and asparagine 204 together coordinate NAD(+). Residue 209–210 (SR) coordinates ATP.

It belongs to the eukaryotic NMN adenylyltransferase family. Requires a divalent metal cation as cofactor.

The catalysed reaction is beta-nicotinamide D-ribonucleotide + ATP + H(+) = diphosphate + NAD(+). The enzyme catalyses nicotinate beta-D-ribonucleotide + ATP + H(+) = deamido-NAD(+) + diphosphate. It participates in cofactor biosynthesis; NAD(+) biosynthesis; deamido-NAD(+) from nicotinate D-ribonucleotide: step 1/1. Its pathway is cofactor biosynthesis; NAD(+) biosynthesis; NAD(+) from nicotinamide D-ribonucleotide: step 1/1. Its function is as follows. Catalyzes the formation of NAD(+) from nicotinamide mononucleotide (NMN) and ATP. Can also use the deamidated form; nicotinic acid mononucleotide (NaMN) as substrate. This Oryza sativa subsp. japonica (Rice) protein is Nicotinamide/nicotinic acid mononucleotide adenylyltransferase.